Here is a 236-residue protein sequence, read N- to C-terminus: MLQIILRRLMKALLWFAAGSALVVLVLRWVPPPGTALMVERKVESWFDGEPIDLQRDWEPWDKISNNLKIAVIAGEDQKFAEHWGFDVDAIQAAILHNEQGGSIRGASTLSQQVSKNLFLWSGRSYLRKGLEAWFTMLIELLWSKERILEVYLNSVEWDEGIFGAQAAAQHHFRTNASALSEQQASYLAAVLPNPRQWSASHPSGYVSRRAGWIRQQMRQLGGDEYLQGLNSSRRW.

The chain crosses the membrane as a helical span at residues 12–31; sequence ALLWFAAGSALVVLVLRWVP.

Belongs to the glycosyltransferase 51 family.

Its subcellular location is the cell inner membrane. It catalyses the reaction [GlcNAc-(1-&gt;4)-Mur2Ac(oyl-L-Ala-gamma-D-Glu-L-Lys-D-Ala-D-Ala)](n)-di-trans,octa-cis-undecaprenyl diphosphate + beta-D-GlcNAc-(1-&gt;4)-Mur2Ac(oyl-L-Ala-gamma-D-Glu-L-Lys-D-Ala-D-Ala)-di-trans,octa-cis-undecaprenyl diphosphate = [GlcNAc-(1-&gt;4)-Mur2Ac(oyl-L-Ala-gamma-D-Glu-L-Lys-D-Ala-D-Ala)](n+1)-di-trans,octa-cis-undecaprenyl diphosphate + di-trans,octa-cis-undecaprenyl diphosphate + H(+). Its pathway is cell wall biogenesis; peptidoglycan biosynthesis. Functionally, peptidoglycan polymerase that catalyzes glycan chain elongation from lipid-linked precursors. The protein is Biosynthetic peptidoglycan transglycosylase of Pseudomonas syringae pv. tomato (strain ATCC BAA-871 / DC3000).